The following is a 593-amino-acid chain: Copine-5 (593 aa).

Residues 2–134 (EQPEDMASLS…SPGSRLEKPL (133 aa)) form the C2 1 domain. S19 carries the post-translational modification Phosphoserine. Residues D38, D44, D98, D100, S103, K108, and D110 each contribute to the Ca(2+) site. S103 carries the post-translational modification Phosphoserine. At S140 the chain carries Phosphoserine. Positions 161–284 (KCGTIILSAE…ARGQSQFNIY (124 aa)) constitute a C2 2 domain. 5 residues coordinate Ca(2+): D192, D198, D254, D256, and D262. Residues 328–554 (NFTVAIDFTA…DVLAEIPDQL (227 aa)) form the VWFA domain. The tract at residues 562–593 (GIRPRPPPAAPTHSPSQSPARTPPASPLHTHI) is disordered. The span at 572 to 581 (PTHSPSQSPA) shows a compositional bias: low complexity.

The protein belongs to the copine family. Requires Ca(2+) as cofactor. In terms of tissue distribution, expressed in the brain, heart, stomach, spleen, lymph node and testis. Expressed in melanocytes.

The protein resides in the perikaryon. Its subcellular location is the cell projection. Functionally, probable calcium-dependent phospholipid-binding protein that may play a role in calcium-mediated intracellular processes. Plays a role in dendrite formation by melanocytes. This chain is Copine-5, found in Homo sapiens (Human).